We begin with the raw amino-acid sequence, 396 residues long: Inositol polyphosphate multikinase (396 aa).

Residues 1–13 show a composition bias toward low complexity; it reads MAAEPPALRLRPP. The disordered stretch occupies residues 1-22; the sequence is MAAEPPALRLRPPGSTGDSPPV. Alanine 2 carries the N-acetylalanine modification. Serine 19 is modified (phosphoserine). Lysine 58 contacts ATP. A substrate-binding site is contributed by arginine 65. ATP contacts are provided by residues 114 to 116 and aspartate 127; that span reads EDV. Residues lysine 129, 143–150, and glutamine 179 each bind substrate; that span reads KIQQQVSK. Residues 300–310 carry the Nuclear localization signal motif; that stretch reads RHRKLYAKKHQ. Aspartate 365 contacts ATP.

It belongs to the inositol phosphokinase (IPK) family. Mg(2+) serves as cofactor.

It is found in the nucleus. It catalyses the reaction 1D-myo-inositol 1,4,5-trisphosphate + 2 ATP = 1D-myo-inositol 1,3,4,5,6-pentakisphosphate + 2 ADP + 2 H(+). The enzyme catalyses 1D-myo-inositol 1,3,4,6-tetrakisphosphate + ATP = 1D-myo-inositol 1,3,4,5,6-pentakisphosphate + ADP + H(+). The catalysed reaction is 1-octadecanoyl-2-(5Z,8Z,11Z,14Z)-eicosatetraenoyl-sn-glycero-3-phospho-1D-myo-inositol 4,5-bisphosphate + ATP = 1-octadecanoyl-2-(5Z,8Z,11Z,14Z-eicosatetraenoyl)-sn-glycero-3-phospho-(1D-myo-inositol 3,4,5-triphosphate) + ADP + H(+). It carries out the reaction a 1,2-diacyl-sn-glycero-3-phospho-(1D-myo-inositol-4,5-bisphosphate) + ATP = a 1,2-diacyl-sn-glycero-3-phospho-(1D-myo-inositol-3,4,5-trisphosphate) + ADP + H(+). It catalyses the reaction 1D-myo-inositol 1,4,5,6-tetrakisphosphate + ATP = 1D-myo-inositol 1,3,4,5,6-pentakisphosphate + ADP + H(+). Its pathway is phospholipid metabolism; phosphatidylinositol metabolism. Its function is as follows. Inositol phosphate kinase with a broad substrate specificity. Phosphorylates inositol 1,4,5-trisphosphate (Ins(1,4,5)P3) first to inositol 1,3,4,5-tetrakisphosphate and then to inositol 1,3,4,5,6-pentakisphosphate (Ins(1,3,4,5,6)P5). Phosphorylates inositol 1,3,4,6-tetrakisphosphate (Ins(1,3,4,6)P4). Phosphorylates inositol 1,4,5,6-tetrakisphosphate (Ins(1,4,5,6)P4). Phosphorylates glycero-3-phospho-1D-myo-inositol 4,5-bisphosphate to glycero-3-phospho-1D-myo-inositol 3,4,5-trisphosphate. Plays an important role in MLKL-mediated necroptosis via its role in the biosynthesis of inositol pentakisphosphate (InsP5) and inositol hexakisphosphate (InsP6). Binding of these highly phosphorylated inositol phosphates to MLKL mediates the release of an N-terminal auto-inhibitory region, leading to activation of the kinase. Essential for activated phospho-MLKL to oligomerize and localize to the cell membrane during necroptosis. Required for normal embryonic development, probably via its role in the biosynthesis of inositol 1,3,4,5,6-pentakisphosphate (Ins(1,3,4,5,6)P5) and inositol hexakisphosphate (InsP6). The protein is Inositol polyphosphate multikinase (Ipmk) of Mus musculus (Mouse).